Here is a 204-residue protein sequence, read N- to C-terminus: Quinol oxidase subunit 3 (204 aa).

5 helical membrane-spanning segments follow: residues 27 to 47 (FWIFLGAEIVLFSTLFATFFV), 66 to 86 (LVMIMTFLLLISSFTCGIAVH), 95 to 115 (GVVIWTIITLLLGAGFVGCEI), 140 to 160 (LLGTHGTHVTIGIFWIIGILI), and 184 to 204 (FLDVVWIFIFTGVYLMGLGGL).

This sequence belongs to the cytochrome c oxidase subunit 3 family.

The protein resides in the cell membrane. The catalysed reaction is 2 a quinol + O2 = 2 a quinone + 2 H2O. Catalyzes quinol oxidation with the concomitant reduction of oxygen to water. Major component for energy conversion during vegetative growth. This is Quinol oxidase subunit 3 (qoxC) from Bacillus spizizenii (strain ATCC 23059 / NRRL B-14472 / W23) (Bacillus subtilis subsp. spizizenii).